Here is a 295-residue protein sequence, read N- to C-terminus: Protein U26 (295 aa).

8 helical membrane passes run 4–24 (LTDS…LYTF), 31–51 (SPLG…LTFK), 66–86 (IVFL…VVMI), 103–123 (VMIM…SLFF), 183–203 (FTVE…FLSM), 218–238 (VFFK…ILSG), 243–263 (VCLY…SIML), and 274–294 (FYAG…MYFG).

It is found in the membrane. The protein is Protein U26 (U26) of Human herpesvirus 6A (strain Uganda-1102) (HHV-6 variant A).